A 433-amino-acid chain; its full sequence is Pseudopaline synthase (433 aa).

Residues 7 to 27 (SLGNVLLVGLGAVAIQVALDL) form a helical membrane-spanning segment. NAD(+) contacts are provided by residues 16–19 (LGAV), 39–40 (NH), and threonine 154. Histidine 219 functions as the Proton donor/acceptor in the catalytic mechanism. Glutamate 364 lines the NAD(+) pocket.

This sequence belongs to the staphylopine dehydrogenase family. Homodimer. Interacts with CntL.

Its subcellular location is the cell membrane. The catalysed reaction is pseudopaline + NAD(+) + H2O = (2S)-2-amino-4-{[(1S)-1-carboxy-2-(1H-imidazol-4-yl)ethyl]amino}butanoate + 2-oxoglutarate + NADH + H(+). Its function is as follows. Catalyzes the NADH-dependent reductive condensation of alpha-ketoglutarate to the intermediate formed by the adjacently encoded enzyme CntL, namely (2S)-2-amino-4-{[(1S)-1-carboxy-2-(1H-imidazol-4-yl)ethyl]amino}butanoate, leading to the production of pseudopaline. This is the last step in the biosynthesis of the metallophore pseudopaline, which is involved in the acquisition of nickel and zinc, and thus enables bacterial growth inside the host, where metal access is limited. Therefore, this enzyme probably contributes to Pseudomonas virulence. Can use neither pyruvate nor NADPH in place of alpha-ketoglutarate and NADH, respectively. This is Pseudopaline synthase from Pseudomonas aeruginosa (strain UCBPP-PA14).